The chain runs to 142 residues: UPF0275 protein PM0505 (142 aa).

Belongs to the UPF0275 family.

The chain is UPF0275 protein PM0505 from Pasteurella multocida (strain Pm70).